The primary structure comprises 752 residues: Photosystem I P700 chlorophyll a apoprotein A1 (752 aa).

8 helical membrane passes run 73-96, 159-182, 198-222, 294-312, 349-372, 388-414, 436-458, and 533-551; these read IFSAHFGHLAVVMVWLSGMIFHGA, LYVTAIGGLVLAGLFLFAGWFHYH, LNHHLQVLLGCGSLGWAGHLIHVSA, IAHHHLAIAVLFIVAGHQY, WHAQLATNLAFLGSLTIIIAHHMY, LCIFTHHIWIGGFLIVGGAAHAAIFMV, AIISHLNWVCIFLGFHSFGLYIH, and FLIHHIHAFTIHVTVLILL. C575 and C584 together coordinate [4Fe-4S] cluster. 2 consecutive transmembrane segments (helical) span residues 591–612 and 666–688; these read HVFLGLFWMYNSLSIVIFHFSW and LSAYGLLFLGAHFVWAFSLMFLF. H677 is a chlorophyll a' binding site. Chlorophyll a is bound by residues M685 and Y693. Residue W694 participates in phylloquinone binding. The chain crosses the membrane as a helical span at residues 726–746; the sequence is AVGVAHYLLGGIATTWAFFHA.

Belongs to the PsaA/PsaB family. As to quaternary structure, the PsaA/B heterodimer binds the P700 chlorophyll special pair and subsequent electron acceptors. PSI consists of a core antenna complex that captures photons, and an electron transfer chain that converts photonic excitation into a charge separation. The cyanobacterial PSI reaction center is composed of one copy each of PsaA,B,C,D,E,F,I,J,K,L,M and X, and forms trimeric complexes. PSI electron transfer chain: 5 chlorophyll a, 1 chlorophyll a', 2 phylloquinones and 3 4Fe-4S clusters. PSI core antenna: 90 chlorophyll a, 22 carotenoids, 3 phospholipids and 1 galactolipid. P700 is a chlorophyll a/chlorophyll a' dimer, A0 is one or more chlorophyll a, A1 is one or both phylloquinones and FX is a shared 4Fe-4S iron-sulfur center. serves as cofactor.

It localises to the cellular thylakoid membrane. It catalyses the reaction reduced [plastocyanin] + hnu + oxidized [2Fe-2S]-[ferredoxin] = oxidized [plastocyanin] + reduced [2Fe-2S]-[ferredoxin]. Functionally, psaA and PsaB bind P700, the primary electron donor of photosystem I (PSI), as well as the electron acceptors A0, A1 and FX. PSI is a plastocyanin/cytochrome c6-ferredoxin oxidoreductase, converting photonic excitation into a charge separation, which transfers an electron from the donor P700 chlorophyll pair to the spectroscopically characterized acceptors A0, A1, FX, FA and FB in turn. Oxidized P700 is reduced on the lumenal side of the thylakoid membrane by plastocyanin or cytochrome c6. This Nostoc punctiforme (strain ATCC 29133 / PCC 73102) protein is Photosystem I P700 chlorophyll a apoprotein A1.